We begin with the raw amino-acid sequence, 95 residues long: Small ribosomal subunit protein uS19 (95 aa).

It belongs to the universal ribosomal protein uS19 family.

Protein S19 forms a complex with S13 that binds strongly to the 16S ribosomal RNA. The chain is Small ribosomal subunit protein uS19 from Chloroflexus aggregans (strain MD-66 / DSM 9485).